The primary structure comprises 190 residues: (S)-2-hydroxypropylphosphonic acid epoxidase (190 aa).

The 51-residue stretch at 10 to 60 (KAHLEALLATRKMTLEHLQDVRHDATQVYFDGLEHLQNVAQYLAIPLSEFF) folds into the HTH cro/C1-type domain. Positions 20-40 (RKMTLEHLQDVRHDATQVYFD) form a DNA-binding region, H-T-H motif. Substrate is bound by residues arginine 87, tyrosine 95, 125 to 128 (NGGH), and glutamate 132. The Fe cation site is built by histidine 128, glutamate 132, and histidine 171. The Cupin type-2 domain maps to 128–176 (HGSREIVYVTRGAVRVRWVGDNDELKEDVLNEGDSIFILPNVPHSFTNH).

The protein belongs to the non-heme iron-dependent dioxygenase family. As to quaternary structure, homotrimer. Fe(2+) serves as cofactor.

The catalysed reaction is (S)-2-hydroxypropylphosphonate + H2O2 = (1R,2S)-epoxypropylphosphonate + 2 H2O. Its pathway is antibiotic biosynthesis; fosfomycin biosynthesis. Its function is as follows. Non-heme-dependent dioxygenase that catalyzes the oxidative epoxidation of (S)-2-hydroxypropylphosphonate into (1R,2S)-epoxypropylphosphonate, the final step in the biosynthesis of fosfomycin antibiotic. The sequence is that of (S)-2-hydroxypropylphosphonic acid epoxidase (hppE) from Pseudomonas syringae.